The sequence spans 142 residues: Hemoglobin subunit alpha (142 aa).

A Globin domain is found at 2–142 (VLSDADKTHV…VATVLTSKYR (141 aa)). S4 is modified (phosphoserine). K8 is subject to N6-succinyllysine. T9 carries the post-translational modification Phosphothreonine. K12 carries the N6-succinyllysine modification. K17 carries the post-translational modification N6-acetyllysine; alternate. K17 is modified (N6-succinyllysine; alternate). A Phosphotyrosine modification is found at Y25. S36 carries the phosphoserine modification. An N6-succinyllysine modification is found at K41. At S50 the chain carries Phosphoserine. H59 contacts O2. H88 is a binding site for heme b. S103 is subject to Phosphoserine. A Phosphothreonine modification is found at T109. Phosphoserine is present on residues S125 and S132. Residues T135 and T138 each carry the phosphothreonine modification. Position 139 is a phosphoserine (S139).

Belongs to the globin family. As to quaternary structure, heterotetramer of two alpha chains and two beta chains. Red blood cells.

Its function is as follows. Involved in oxygen transport from the lung to the various peripheral tissues. Functionally, hemopressin acts as an antagonist peptide of the cannabinoid receptor CNR1. Hemopressin-binding efficiently blocks cannabinoid receptor CNR1 and subsequent signaling. This Dasyurus viverrinus (Eastern quoll) protein is Hemoglobin subunit alpha (HBA).